A 310-amino-acid chain; its full sequence is Protoheme IX farnesyltransferase (310 aa).

Transmembrane regions (helical) follow at residues 26–46 (VMSL…ATVH), 47–67 (PMIA…SGAL), 95–115 (GEAL…LGLA), 118–138 (LFAA…YSMW), 147–167 (IVIG…VATG), 174–194 (LFMF…LALF), 220–240 (VLAY…TGIG), 243–263 (LYLV…VRIW), and 281–301 (FFRF…AEAA).

The protein belongs to the UbiA prenyltransferase family. Protoheme IX farnesyltransferase subfamily. In terms of assembly, interacts with CtaA.

It is found in the cell inner membrane. The enzyme catalyses heme b + (2E,6E)-farnesyl diphosphate + H2O = Fe(II)-heme o + diphosphate. Its pathway is porphyrin-containing compound metabolism; heme O biosynthesis; heme O from protoheme: step 1/1. Functionally, converts heme B (protoheme IX) to heme O by substitution of the vinyl group on carbon 2 of heme B porphyrin ring with a hydroxyethyl farnesyl side group. In Cereibacter sphaeroides (strain ATCC 17025 / ATH 2.4.3) (Rhodobacter sphaeroides), this protein is Protoheme IX farnesyltransferase.